The following is a 491-amino-acid chain: UDP-N-acetylmuramate--L-alanine ligase (491 aa).

126 to 132 (GTHGKTT) serves as a coordination point for ATP.

Belongs to the MurCDEF family.

Its subcellular location is the cytoplasm. It catalyses the reaction UDP-N-acetyl-alpha-D-muramate + L-alanine + ATP = UDP-N-acetyl-alpha-D-muramoyl-L-alanine + ADP + phosphate + H(+). Its pathway is cell wall biogenesis; peptidoglycan biosynthesis. Its function is as follows. Cell wall formation. The chain is UDP-N-acetylmuramate--L-alanine ligase from Salmonella arizonae (strain ATCC BAA-731 / CDC346-86 / RSK2980).